Reading from the N-terminus, the 420-residue chain is Fasciclin-like arabinogalactan protein 4 (420 aa).

Residues M1–A28 form the signal peptide. FAS1 domains follow at residues I29–I177 and G205–L351. N-linked (GlcNAc...) asparagine glycosylation is found at N30, N40, N135, N154, N167, N207, N312, and N317. The segment at S360 to S388 is disordered. Over residues P368–S384 the composition is skewed to low complexity. A lipid anchor (GPI-anchor amidated serine) is attached at S396. A propeptide spans G397–V420 (removed in mature form).

The protein belongs to the fasciclin-like AGP family. As to expression, expressed in all plant organs and tissues, including guard cells in the leaf.

The protein resides in the cell membrane. Functionally, may be a cell surface adhesion protein that is required for normal cell expansion. This chain is Fasciclin-like arabinogalactan protein 4 (FLA4), found in Arabidopsis thaliana (Mouse-ear cress).